Here is a 138-residue protein sequence, read N- to C-terminus: MTTRYLLDKSAAYRAHLPAVRHRLEPLMERGLLARCGITDLEFGVSARSREDHRTLGTYRRDALEYVNTPDTVWVRAWEIQEALTDKGFHRSVKIPDLIIAAVAEHHGIPVMHYDQDFERIAAITRQPVEWVVAPGTA.

One can recognise a PINc domain in the interval 6–128 (LLDKSAAYRA…ERIAAITRQP (123 aa)). The Mg(2+) site is built by Asp8 and Asp97.

This sequence belongs to the PINc/VapC protein family. It depends on Mg(2+) as a cofactor.

Toxic component of a type II toxin-antitoxin (TA) system. An RNase. Its toxic effect is neutralized by coexpression with cognate antitoxin VapB21. The sequence is that of Ribonuclease VapC21 from Mycobacterium tuberculosis (strain CDC 1551 / Oshkosh).